The chain runs to 201 residues: Adenylyl-sulfate kinase (201 aa).

Glycine 35–serine 42 is a binding site for ATP. Catalysis depends on serine 109, which acts as the Phosphoserine intermediate.

Belongs to the APS kinase family.

The enzyme catalyses adenosine 5'-phosphosulfate + ATP = 3'-phosphoadenylyl sulfate + ADP + H(+). Its pathway is sulfur metabolism; hydrogen sulfide biosynthesis; sulfite from sulfate: step 2/3. In terms of biological role, catalyzes the synthesis of activated sulfate. The protein is Adenylyl-sulfate kinase of Salmonella typhi.